We begin with the raw amino-acid sequence, 678 residues long: Methionine--tRNA ligase (678 aa).

A 'HIGH' region motif is present at residues 18-28 (PYANGPIHLGH). Positions 149, 152, 162, and 165 each coordinate Zn(2+). A 'KMSKS' region motif is present at residues 334–338 (KMSKS). K337 contacts ATP. The tRNA-binding domain occupies 577–678 (DFAKVDLRVA…SGATPGMRVM (102 aa)).

This sequence belongs to the class-I aminoacyl-tRNA synthetase family. MetG type 1 subfamily. Homodimer. The cofactor is Zn(2+).

It is found in the cytoplasm. The enzyme catalyses tRNA(Met) + L-methionine + ATP = L-methionyl-tRNA(Met) + AMP + diphosphate. In terms of biological role, is required not only for elongation of protein synthesis but also for the initiation of all mRNA translation through initiator tRNA(fMet) aminoacylation. The sequence is that of Methionine--tRNA ligase from Marinobacter nauticus (strain ATCC 700491 / DSM 11845 / VT8) (Marinobacter aquaeolei).